The primary structure comprises 59 residues: Three-finger toxin MS1 (59 aa).

Intrachain disulfides connect C3-C22, C17-C39, C41-C52, and C53-C58.

This sequence belongs to the three-finger toxin family. Short-chain subfamily. Type I alpha-neurotoxin sub-subfamily. In terms of tissue distribution, expressed by the venom gland.

It localises to the secreted. Produces peripheral paralysis by blocking neuromuscular transmission at the postsynaptic site. Binds to and inhibits the endogenous nicotinic acetylcholine receptors (nAChR) in human rhabdomyosarcoma TE 671 cell line with an IC(50) of 48.2 mM. This neurotoxin is lethal to mice by intraperitoneal injection and to zebrafish by injection at the back of the dorsolateral region. The protein is Three-finger toxin MS1 of Micrurus surinamensis (Surinam coral snake).